A 223-amino-acid chain; its full sequence is Proteasome subunit beta type-1 (223 aa).

This sequence belongs to the peptidase T1B family. Component of the 20S core complex of the 26S proteasome. The 26S proteasome is composed of a core protease (CP), known as the 20S proteasome, capped at one or both ends by the 19S regulatory particle (RP/PA700). The 20S proteasome core is composed of 28 subunits that are arranged in four stacked rings, resulting in a barrel-shaped structure. The two end rings are each formed by seven alpha subunits, and the two central rings are each formed by seven beta subunits. The catalytic chamber with the active sites is on the inside of the barrel. In terms of tissue distribution, present in all tissues examined. Slightly lower levels in roots.

Its subcellular location is the cytoplasm. The protein resides in the nucleus. Its function is as follows. Non-catalytic component of the proteasome, a multicatalytic proteinase complex which is characterized by its ability to cleave peptides with Arg, Phe, Tyr, Leu, and Glu adjacent to the leaving group at neutral or slightly basic pH. The proteasome has an ATP-dependent proteolytic activity. This Arabidopsis thaliana (Mouse-ear cress) protein is Proteasome subunit beta type-1 (PBF1).